Consider the following 397-residue polypeptide: Phosphoglycerate kinase (397 aa).

Substrate contacts are provided by residues aspartate 25–asparagine 27, arginine 41, histidine 64–arginine 67, arginine 118, and arginine 151. Residues lysine 202, glutamate 324, and glycine 350–threonine 353 each bind ATP.

It belongs to the phosphoglycerate kinase family. As to quaternary structure, monomer.

The protein resides in the cytoplasm. The catalysed reaction is (2R)-3-phosphoglycerate + ATP = (2R)-3-phospho-glyceroyl phosphate + ADP. Its pathway is carbohydrate degradation; glycolysis; pyruvate from D-glyceraldehyde 3-phosphate: step 2/5. This Herminiimonas arsenicoxydans protein is Phosphoglycerate kinase.